Reading from the N-terminus, the 486-residue chain is Hydrogenobyrinate a,c-diamide synthase (486 aa).

Positions 254–272 (SPPPPLPVPSPGAAPPDPL) are enriched in pro residues. The disordered stretch occupies residues 254–284 (SPPPPLPVPSPGAAPPDPLVRPGRPRPQAPD). The region spanning 289–474 (RVAMASGAAF…LHTHWAAEPG (186 aa)) is the GATase cobBQ-type domain. Catalysis depends on cysteine 372, which acts as the Nucleophile.

It belongs to the CobB/CbiA family. It depends on Mg(2+) as a cofactor.

It carries out the reaction hydrogenobyrinate + 2 L-glutamine + 2 ATP + 2 H2O = hydrogenobyrinate a,c-diamide + 2 L-glutamate + 2 ADP + 2 phosphate + 2 H(+). Its pathway is cofactor biosynthesis; adenosylcobalamin biosynthesis; cob(II)yrinate a,c-diamide from precorrin-2 (aerobic route): step 9/10. Its function is as follows. Catalyzes the ATP-dependent amidation of the two carboxylate groups at positions a and c of hydrogenobyrinate, using either L-glutamine or ammonia as the nitrogen source. The polypeptide is Hydrogenobyrinate a,c-diamide synthase (Streptomyces coelicolor (strain ATCC BAA-471 / A3(2) / M145)).